The primary structure comprises 170 residues: Adenine phosphoribosyltransferase (170 aa).

This sequence belongs to the purine/pyrimidine phosphoribosyltransferase family. As to quaternary structure, homodimer.

The protein resides in the cytoplasm. The enzyme catalyses AMP + diphosphate = 5-phospho-alpha-D-ribose 1-diphosphate + adenine. Its pathway is purine metabolism; AMP biosynthesis via salvage pathway; AMP from adenine: step 1/1. In terms of biological role, catalyzes a salvage reaction resulting in the formation of AMP, that is energically less costly than de novo synthesis. This is Adenine phosphoribosyltransferase from Enterococcus faecalis (strain ATCC 700802 / V583).